A 399-amino-acid chain; its full sequence is Acetate kinase (399 aa).

N10 contacts Mg(2+). Position 17 (K17) interacts with ATP. R91 contacts substrate. The active-site Proton donor/acceptor is the D148. Residues 208 to 212, 283 to 285, and 331 to 335 each bind ATP; these read HLGNG, DCR, and GIGEN. E385 is a binding site for Mg(2+).

Belongs to the acetokinase family. As to quaternary structure, homodimer. Requires Mg(2+) as cofactor. Mn(2+) serves as cofactor.

The protein resides in the cytoplasm. The catalysed reaction is acetate + ATP = acetyl phosphate + ADP. It functions in the pathway metabolic intermediate biosynthesis; acetyl-CoA biosynthesis; acetyl-CoA from acetate: step 1/2. In terms of biological role, catalyzes the formation of acetyl phosphate from acetate and ATP. Can also catalyze the reverse reaction. This Shewanella oneidensis (strain ATCC 700550 / JCM 31522 / CIP 106686 / LMG 19005 / NCIMB 14063 / MR-1) protein is Acetate kinase.